The following is a 399-amino-acid chain: Pyridinium-3,5-bisthiocarboxylic acid mononucleotide nickel insertion protein (399 aa).

The protein belongs to the LarC family.

It carries out the reaction Ni(II)-pyridinium-3,5-bisthiocarboxylate mononucleotide = pyridinium-3,5-bisthiocarboxylate mononucleotide + Ni(2+). Functionally, involved in the biosynthesis of a nickel-pincer cofactor ((SCS)Ni(II) pincer complex). Binds Ni(2+), and functions in nickel delivery to pyridinium-3,5-bisthiocarboxylic acid mononucleotide (P2TMN), to form the mature cofactor. Is thus probably required for the activation of nickel-pincer cofactor-dependent enzymes. The protein is Pyridinium-3,5-bisthiocarboxylic acid mononucleotide nickel insertion protein of Clostridium kluyveri (strain ATCC 8527 / DSM 555 / NBRC 12016 / NCIMB 10680 / K1).